Reading from the N-terminus, the 237-residue chain is Urease accessory protein UreF (237 aa).

The protein belongs to the UreF family. In terms of assembly, ureD, UreF and UreG form a complex that acts as a GTP-hydrolysis-dependent molecular chaperone, activating the urease apoprotein by helping to assemble the nickel containing metallocenter of UreC. The UreE protein probably delivers the nickel.

It localises to the cytoplasm. In terms of biological role, required for maturation of urease via the functional incorporation of the urease nickel metallocenter. This chain is Urease accessory protein UreF, found in Streptococcus thermophilus (strain ATCC BAA-250 / LMG 18311).